Consider the following 509-residue polypeptide: Scavenger receptor class B member 1 (509 aa).

Over Met-1 to Ala-11 the chain is Cytoplasmic. A helical transmembrane segment spans residues Ala-12–Val-32. Over Pro-33–Lys-439 the chain is Extracellular. N-linked (GlcNAc...) asparagine glycans are attached at residues Asn-102, Asn-108, Asn-173, Asn-212, Asn-255, Asn-310, Asn-330, and Asn-383. A disulfide bridge links Cys-251 with Cys-384. A helical membrane pass occupies residues Val-440–Ile-460. Residues Val-461–Leu-509 lie on the Cytoplasmic side of the membrane.

The protein belongs to the CD36 family. In terms of assembly, the C-terminal region binds to PDZK1. N-glycosylated. Post-translationally, the six cysteines of the extracellular domain are all involved in intramolecular disulfide bonds.

Its subcellular location is the cell membrane. The protein resides in the membrane. The protein localises to the caveola. Its function is as follows. Receptor for different ligands such as phospholipids, cholesterol ester, lipoproteins, phosphatidylserine and apoptotic cells. Receptor for HDL, mediating selective uptake of cholesteryl ether and HDL-dependent cholesterol efflux. Also facilitates the flux of free and esterified cholesterol between the cell surface and apoB-containing lipoproteins and modified lipoproteins, although less efficiently than HDL. May be involved in the phagocytosis of apoptotic cells, via its phosphatidylserine binding activity. This chain is Scavenger receptor class B member 1 (SCARB1), found in Sus scrofa (Pig).